The following is a 237-amino-acid chain: Demethylmenaquinone methyltransferase (237 aa).

Residues Thr-58, Asp-79, and 106-107 each bind S-adenosyl-L-methionine; that span reads NA.

This sequence belongs to the class I-like SAM-binding methyltransferase superfamily. MenG/UbiE family.

It carries out the reaction a 2-demethylmenaquinol + S-adenosyl-L-methionine = a menaquinol + S-adenosyl-L-homocysteine + H(+). It participates in quinol/quinone metabolism; menaquinone biosynthesis; menaquinol from 1,4-dihydroxy-2-naphthoate: step 2/2. Methyltransferase required for the conversion of demethylmenaquinol (DMKH2) to menaquinol (MKH2). The protein is Demethylmenaquinone methyltransferase of Bacillus cereus (strain B4264).